A 503-amino-acid chain; its full sequence is Cytochrome P450 3A12 (503 aa).

Residue C442 coordinates heme.

The protein belongs to the cytochrome P450 family. Heme serves as cofactor.

The protein resides in the endoplasmic reticulum membrane. Its subcellular location is the microsome membrane. It carries out the reaction an organic molecule + reduced [NADPH--hemoprotein reductase] + O2 = an alcohol + oxidized [NADPH--hemoprotein reductase] + H2O + H(+). Cytochromes P450 are a group of heme-thiolate monooxygenases. In liver microsomes, this enzyme is involved in an NADPH-dependent electron transport pathway. It oxidizes a variety of structurally unrelated compounds, including steroids, fatty acids, and xenobiotics. In Canis lupus familiaris (Dog), this protein is Cytochrome P450 3A12 (CYP3A12).